Here is a 360-residue protein sequence, read N- to C-terminus: tRNA-specific 2-thiouridylase MnmA (360 aa).

Residues 8 to 15 (GMSGGVDS) and Met34 contribute to the ATP site. The segment at 94 to 96 (NPD) is interaction with target base in tRNA. Cys99 functions as the Nucleophile in the catalytic mechanism. A disulfide bond links Cys99 and Cys195. Gly123 lines the ATP pocket. The interval 145–147 (KDQ) is interaction with tRNA. The active-site Cysteine persulfide intermediate is Cys195. An interaction with tRNA region spans residues 307–308 (RY).

Belongs to the MnmA/TRMU family.

The protein resides in the cytoplasm. It carries out the reaction S-sulfanyl-L-cysteinyl-[protein] + uridine(34) in tRNA + AH2 + ATP = 2-thiouridine(34) in tRNA + L-cysteinyl-[protein] + A + AMP + diphosphate + H(+). In terms of biological role, catalyzes the 2-thiolation of uridine at the wobble position (U34) of tRNA, leading to the formation of s(2)U34. This Methylobacillus flagellatus (strain ATCC 51484 / DSM 6875 / VKM B-1610 / KT) protein is tRNA-specific 2-thiouridylase MnmA.